A 210-amino-acid chain; its full sequence is MGQKVNPIGFRLGVIKTWDSKWYAEADFAKNLHEDLKIRQFLKKRLYSAGISKIEIERAANKTKINIHAARPGLIIGKKGAEVELLKKDLAAITSKEVFININEVRKPELDAQLVAENVALQLERRIAFRRAMKKSVTSSLKFGAKGIRITCSGRLGGAEMSRTEWYREGRVPLHTLRADIDYGFAEAKTTYGIIGVKVLIFKGEVLPGQ.

Positions 38-106 (IRQFLKKRLY…EVFININEVR (69 aa)) constitute a KH type-2 domain.

The protein belongs to the universal ribosomal protein uS3 family. In terms of assembly, part of the 30S ribosomal subunit. Forms a tight complex with proteins S10 and S14.

Functionally, binds the lower part of the 30S subunit head. Binds mRNA in the 70S ribosome, positioning it for translation. This Trichlorobacter lovleyi (strain ATCC BAA-1151 / DSM 17278 / SZ) (Geobacter lovleyi) protein is Small ribosomal subunit protein uS3.